A 41-amino-acid polypeptide reads, in one-letter code: Large ribosomal subunit protein bL36 (41 aa).

Belongs to the bacterial ribosomal protein bL36 family.

The chain is Large ribosomal subunit protein bL36 from Sphingopyxis alaskensis (strain DSM 13593 / LMG 18877 / RB2256) (Sphingomonas alaskensis).